The primary structure comprises 237 residues: Phosphatidylserine decarboxylase proenzyme (237 aa).

Residue serine 206 is the Schiff-base intermediate with substrate; via pyruvic acid of the active site. Serine 206 carries the pyruvic acid (Ser); by autocatalysis modification.

Belongs to the phosphatidylserine decarboxylase family. PSD-A subfamily. In terms of assembly, heterodimer of a large membrane-associated beta subunit and a small pyruvoyl-containing alpha subunit. Requires pyruvate as cofactor. Post-translationally, is synthesized initially as an inactive proenzyme. Formation of the active enzyme involves a self-maturation process in which the active site pyruvoyl group is generated from an internal serine residue via an autocatalytic post-translational modification. Two non-identical subunits are generated from the proenzyme in this reaction, and the pyruvate is formed at the N-terminus of the alpha chain, which is derived from the carboxyl end of the proenzyme. The post-translation cleavage follows an unusual pathway, termed non-hydrolytic serinolysis, in which the side chain hydroxyl group of the serine supplies its oxygen atom to form the C-terminus of the beta chain, while the remainder of the serine residue undergoes an oxidative deamination to produce ammonia and the pyruvoyl prosthetic group on the alpha chain.

The protein resides in the cell membrane. It catalyses the reaction a 1,2-diacyl-sn-glycero-3-phospho-L-serine + H(+) = a 1,2-diacyl-sn-glycero-3-phosphoethanolamine + CO2. It participates in phospholipid metabolism; phosphatidylethanolamine biosynthesis; phosphatidylethanolamine from CDP-diacylglycerol: step 2/2. Catalyzes the formation of phosphatidylethanolamine (PtdEtn) from phosphatidylserine (PtdSer). The chain is Phosphatidylserine decarboxylase proenzyme from Rhodococcus jostii (strain RHA1).